Here is a 115-residue protein sequence, read N- to C-terminus: MTRVKRGNVARKHRNKILNLAKGFRGAHSVLFRTANQQIIKSLRYAYRDRARKKRDFRKLWIARINAASRQNNISYSQLINQLKTSNILLNRKILAQIALLDGPVFSQIVMESNS.

The protein belongs to the bacterial ribosomal protein bL20 family.

The protein resides in the plastid. Its subcellular location is the chloroplast. In terms of biological role, binds directly to 23S ribosomal RNA and is necessary for the in vitro assembly process of the 50S ribosomal subunit. It is not involved in the protein synthesizing functions of that subunit. This is Large ribosomal subunit protein bL20c (rpl20) from Mesostigma viride (Green alga).